The sequence spans 315 residues: Protoheme IX farnesyltransferase (315 aa).

The next 9 helical transmembrane spans lie at isoleucine 38–proline 58, leucine 62–methionine 82, leucine 111–tryptophan 131, leucine 132–leucine 152, asparagine 159–threonine 179, tryptophan 184–leucine 204, isoleucine 233–threonine 253, tryptophan 255–leucine 275, and leucine 293–phenylalanine 313.

It belongs to the UbiA prenyltransferase family. Protoheme IX farnesyltransferase subfamily.

It is found in the cell membrane. The catalysed reaction is heme b + (2E,6E)-farnesyl diphosphate + H2O = Fe(II)-heme o + diphosphate. It functions in the pathway porphyrin-containing compound metabolism; heme O biosynthesis; heme O from protoheme: step 1/1. Its function is as follows. Converts heme B (protoheme IX) to heme O by substitution of the vinyl group on carbon 2 of heme B porphyrin ring with a hydroxyethyl farnesyl side group. The sequence is that of Protoheme IX farnesyltransferase from Streptomyces coelicolor (strain ATCC BAA-471 / A3(2) / M145).